The following is a 240-amino-acid chain: MTPHRLLPPLLLLLALLLAASPGGALARCPGCGQGVQAGCPGGCVEEEDGGSPAEGCAEAEGCLRREGQECGVYTPNCAPGLQCHPPKDDEAPLRALLLGRGRCLPARAPAVAEENPKESKPQAGTARPQDVNRRDQQRNPGTSTTPSQPNSAGVQDTEMGPCRRHLDSVLQQLQTEVYRGAQTLYVPNCDHRGFYRKRQCRSSQGQRRGPCWCVDRMGKSLPGSPDGNGSSSCPTGSSG.

The signal sequence occupies residues M1–A27. An IGFBP N-terminal domain is found at R28 to A107. 5 cysteine pairs are disulfide-bonded: C29/C32, C40/C44, C57/C63, C71/C84, and C78/C104. A disordered region spans residues A109 to M160. T126 carries O-linked (HexNAc...) threonine glycosylation. Over residues R139–V155 the composition is skewed to polar residues. The O-linked (HexNAc...) serine glycan is linked to S144. O-linked (HexNAc...) threonine glycosylation is found at T145 and T146. The O-linked (HexNAc...) serine glycan is linked to S152. The 75-residue stretch at M160–C234 folds into the Thyroglobulin type-1 domain. 3 disulfides stabilise this stretch: C163/C190, C201/C212, and C214/C234. Residues R217 to G240 are disordered. Residues G228–G240 show a composition bias toward polar residues.

In terms of assembly, interacts (via C-terminal domain) with PHB2. O-linked glycans consist of hexose (probably Gal), N-acetylhexosamine (probably GalNAc) and sialic acid residues. O-glycosylated with core 1 or possibly core 8 glycans. O-glycosylated on one site only in the region AA 143-168 in cerebrospinal fluid.

The protein resides in the secreted. Its function is as follows. IGF-binding proteins prolong the half-life of the IGFs and have been shown to either inhibit or stimulate the growth promoting effects of the IGFs on cell culture. They alter the interaction of IGFs with their cell surface receptors. Activates the MAPK signaling pathway and induces cell migration. In Homo sapiens (Human), this protein is Insulin-like growth factor-binding protein 6.